Consider the following 118-residue polypeptide: uncharacterized protein (118 aa).

The protein to E.coli YeaO.

This is an uncharacterized protein from Mycobacterium bovis (strain ATCC BAA-935 / AF2122/97).